The following is a 233-amino-acid chain: Adenosine 5'-phosphosulfate reductase 1 (233 aa).

[4Fe-4S] cluster contacts are provided by cysteine 120, cysteine 121, cysteine 203, and cysteine 206. Cysteine 229 functions as the Nucleophile; cysteine thiosulfonate intermediate in the catalytic mechanism.

This sequence belongs to the PAPS reductase family. CysH subfamily. [4Fe-4S] cluster serves as cofactor.

It localises to the cytoplasm. The catalysed reaction is [thioredoxin]-disulfide + sulfite + AMP + 2 H(+) = adenosine 5'-phosphosulfate + [thioredoxin]-dithiol. Its pathway is sulfur metabolism; hydrogen sulfide biosynthesis; sulfite from sulfate. Functionally, catalyzes the formation of sulfite from adenosine 5'-phosphosulfate (APS) using thioredoxin as an electron donor. The polypeptide is Adenosine 5'-phosphosulfate reductase 1 (cysH) (Bacillus subtilis (strain 168)).